The primary structure comprises 283 residues: Protein MGARP (283 aa).

Residues 1-36 form a disordered region; it reads MYLRRAVSKTLALPRRAPPGPAPLGKDASLRRMSSR. Residues 1 to 41 lie on the Cytoplasmic side of the membrane; sequence MYLRRAVSKTLALPRRAPPGPAPLGKDASLRRMSSRKFPGT. A helical; Anchor for type IV membrane protein transmembrane segment spans residues 42-64; that stretch reads SGSNMIYYLVVGVTVSAGGYYTY. Topologically, residues 65–283 are mitochondrial intermembrane; the sequence is KALTSKQVRR…VTEETASPQG (219 aa). Disordered stretches follow at residues 78–101 and 118–283; these read VAEP…EHVA and AESV…SPQG. The segment covering 128-160 has biased composition (low complexity); it reads EAAVVLPEESQASAPSEVPAEAAVVEASLSSSE. Polar residues-rich tracts occupy residues 171-184 and 199-220; these read VETT…TQEV and ADTS…QEGA. The segment covering 221–245 has biased composition (basic and acidic residues); that stretch reads DTTKEEADNSKEAEGTTTEDPRSIS.

In terms of assembly, interacts with RHOT1/Miro-1, RHOT2/Miro-2, TRAK1/OIP106 and TRAK2/GRIF1. In terms of tissue distribution, expressed in the ovary, testis, brain, adrenal glands and the compartments of the visual nervous system. Expressed in corneal endothelium (CE) (at protein level). Expressed in steroidogenic tissues with the highest level of expression observed in the adrenal gland. Weakly expressed in placenta. Weakly expressed in astrocytes and neurons under normoxia. Strongly expressed in astrocytes and neurons under hypoxia. Expressed in each layer of the retina, with particularly higher staining in the inner segment of the photoreceptor (IS), the outer plexiform layer (OPL) and the ganglion cell layer (GCL).

The protein localises to the mitochondrion. The protein resides in the mitochondrion outer membrane. It is found in the mitochondrion inner membrane. In terms of biological role, plays a role in the trafficking of mitochondria along microtubules. Regulates the kinesin-mediated axonal transport of mitochondria to nerve terminals along microtubules during hypoxia. Participates in the translocation of TRAK2/GRIF1 from the cytoplasm to the mitochondrion. Also plays a role in steroidogenesis through maintenance of mitochondrial abundance and morphology. Plays an inhibitory role during neocortex development by regulating mitochondrial morphology, distribution and motility in neocortical neurons. The protein is Protein MGARP (Mgarp) of Mus musculus (Mouse).